We begin with the raw amino-acid sequence, 63 residues long: Cytochrome c oxidase subunit 5C-1 (63 aa).

The helical transmembrane segment at 15–34 (SEVKELIIGSVLGLAAGGLW) threads the bilayer.

The protein belongs to the cytochrome c oxidase subunit 5C family.

The protein resides in the mitochondrion inner membrane. In terms of biological role, this protein is one of the nuclear-coded polypeptide chains of cytochrome c oxidase, the terminal oxidase in mitochondrial electron transport. This is Cytochrome c oxidase subunit 5C-1 (COX5C1) from Helianthus annuus (Common sunflower).